Reading from the N-terminus, the 665-residue chain is Methionine--tRNA ligase (665 aa).

The short motif at 13–23 is the 'HIGH' region element; the sequence is YYPSGKLHIGS. A 'KMSKS' region motif is present at residues 309-313; sequence KMSKS. Lys-312 provides a ligand contact to ATP. Positions 562 to 665 constitute a tRNA-binding domain; sequence DFDKVEIRVA…PAVPNGSVIG (104 aa).

It belongs to the class-I aminoacyl-tRNA synthetase family. MetG type 2B subfamily. In terms of assembly, homodimer.

The protein localises to the cytoplasm. It catalyses the reaction tRNA(Met) + L-methionine + ATP = L-methionyl-tRNA(Met) + AMP + diphosphate. Is required not only for elongation of protein synthesis but also for the initiation of all mRNA translation through initiator tRNA(fMet) aminoacylation. This is Methionine--tRNA ligase (metG) from Streptococcus pneumoniae serotype 4 (strain ATCC BAA-334 / TIGR4).